The following is a 396-amino-acid chain: Deoxyuridine 5'-triphosphate nucleotidohydrolase (396 aa).

Substrate is bound by residues 280–282 (RSS) and 380–381 (FG).

Belongs to the dUTPase family. Requires Mg(2+) as cofactor.

It carries out the reaction dUTP + H2O = dUMP + diphosphate + H(+). In terms of biological role, involved in nucleotide metabolism: produces dUMP, the immediate precursor of thymidine nucleotides and decreases the intracellular concentration of dUTP to avoid uracil incorporation into viral DNA. In Homo sapiens (Human), this protein is Deoxyuridine 5'-triphosphate nucleotidohydrolase.